The primary structure comprises 364 residues: N-acetyl-gamma-glutamyl-phosphate reductase (364 aa).

Residue C157 is part of the active site.

Belongs to the NAGSA dehydrogenase family. Type 1 subfamily.

It localises to the cytoplasm. The catalysed reaction is N-acetyl-L-glutamate 5-semialdehyde + phosphate + NADP(+) = N-acetyl-L-glutamyl 5-phosphate + NADPH + H(+). The protein operates within amino-acid biosynthesis; L-arginine biosynthesis; N(2)-acetyl-L-ornithine from L-glutamate: step 3/4. Its function is as follows. Catalyzes the NADPH-dependent reduction of N-acetyl-5-glutamyl phosphate to yield N-acetyl-L-glutamate 5-semialdehyde. The polypeptide is N-acetyl-gamma-glutamyl-phosphate reductase (Bifidobacterium longum (strain DJO10A)).